We begin with the raw amino-acid sequence, 462 residues long: ATP synthase subunit beta (462 aa).

152–159 serves as a coordination point for ATP; the sequence is GGAGVGKT.

The protein belongs to the ATPase alpha/beta chains family. F-type ATPases have 2 components, CF(1) - the catalytic core - and CF(0) - the membrane proton channel. CF(1) has five subunits: alpha(3), beta(3), gamma(1), delta(1), epsilon(1). CF(0) has three main subunits: a(1), b(2) and c(9-12). The alpha and beta chains form an alternating ring which encloses part of the gamma chain. CF(1) is attached to CF(0) by a central stalk formed by the gamma and epsilon chains, while a peripheral stalk is formed by the delta and b chains.

It localises to the cell inner membrane. The enzyme catalyses ATP + H2O + 4 H(+)(in) = ADP + phosphate + 5 H(+)(out). Its function is as follows. Produces ATP from ADP in the presence of a proton gradient across the membrane. The catalytic sites are hosted primarily by the beta subunits. This Tolumonas auensis (strain DSM 9187 / NBRC 110442 / TA 4) protein is ATP synthase subunit beta.